The primary structure comprises 271 residues: Type III pantothenate kinase (271 aa).

6 to 13 (DVRNTHTV) is an ATP binding site. 109 to 112 (GADR) serves as a coordination point for substrate. Asp-111 serves as the catalytic Proton acceptor. Asp-131 is a K(+) binding site. Ser-134 provides a ligand contact to ATP. Thr-186 provides a ligand contact to substrate.

The protein belongs to the type III pantothenate kinase family. In terms of assembly, homodimer. Requires NH4(+) as cofactor. K(+) serves as cofactor.

The protein resides in the cytoplasm. It catalyses the reaction (R)-pantothenate + ATP = (R)-4'-phosphopantothenate + ADP + H(+). It functions in the pathway cofactor biosynthesis; coenzyme A biosynthesis; CoA from (R)-pantothenate: step 1/5. In terms of biological role, catalyzes the phosphorylation of pantothenate (Pan), the first step in CoA biosynthesis. The protein is Type III pantothenate kinase of Mycolicibacterium vanbaalenii (strain DSM 7251 / JCM 13017 / BCRC 16820 / KCTC 9966 / NRRL B-24157 / PYR-1) (Mycobacterium vanbaalenii).